The following is a 72-amino-acid chain: Conotoxin VnMKLT2-0221 (72 aa).

An N-terminal signal peptide occupies residues 1-22; the sequence is MKLTCVLIVAVLFLTACQLTTA. Residues 23-45 constitute a propeptide that is removed on maturation; the sequence is ASYARSERQHPDLGSSDQNSKLT. The tract at residues 26–45 is disordered; the sequence is ARSERQHPDLGSSDQNSKLT. Cystine bridges form between Cys-48/Cys-62, Cys-55/Cys-66, and Cys-61/Cys-71.

It belongs to the conotoxin O1 superfamily. In terms of tissue distribution, expressed by the venom duct.

Its subcellular location is the secreted. The sequence is that of Conotoxin VnMKLT2-0221 from Conus ventricosus (Mediterranean cone).